Here is a 66-residue protein sequence, read N- to C-terminus: Sodium/potassium-transporting ATPase subunit gamma (66 aa).

A helical membrane pass occupies residues 29–46 (GGLIFAGLAFIVGLLILL).

The protein belongs to the FXYD family. As to quaternary structure, regulatory subunit of the sodium/potassium-transporting ATPase which is composed of a catalytic alpha subunit, an auxiliary non-catalytic beta subunit and an additional regulatory subunit. Expressed in the distal convoluted tubule in the kidney. Found on basolateral membranes of nephron epithelial cells.

The protein localises to the membrane. Its function is as follows. May be involved in forming the receptor site for cardiac glycoside binding or may modulate the transport function of the sodium ATPase. The chain is Sodium/potassium-transporting ATPase subunit gamma (FXYD2) from Homo sapiens (Human).